The following is a 555-amino-acid chain: Transmembrane protein 87A (555 aa).

The first 21 residues, 1–21, serve as a signal peptide directing secretion; it reads MAAAAWLQVLPVILLLLGAHP. Residues 22–225 lie on the Lumenal side of the membrane; that stretch reads SPLSFFSAGP…YEYLTLEDYP (204 aa). 2 cysteine pairs are disulfide-bonded: Cys74-Cys128 and Cys89-Cys431. 4 N-linked (GlcNAc...) asparagine glycosylation sites follow: Asn79, Asn127, Asn157, and Asn160. Residues 226 to 246 traverse the membrane as a helical segment; sequence LMIFFMVMCIVYVLFGVLWLA. The Cytoplasmic segment spans residues 247–257; sequence WSACYWRDLLR. Residues 258–278 form a helical membrane-spanning segment; the sequence is IQFWIGAVIFLGMLEKAVFYA. At 279-305 the chain is on the lumenal side; sequence EFQNIRYKGESVQGALILAELLSAVKR. A helical membrane pass occupies residues 306–322; the sequence is SLARTLVIIVSLGYGIV. Over 323–325 the chain is Cytoplasmic; that stretch reads KPR. A helical membrane pass occupies residues 326–346; the sequence is LGVTLHKVVVAGALYLLFSGM. Over 347 to 361 the chain is Lumenal; it reads EGVLRVTGAQTDLAS. The helical transmembrane segment at 362 to 382 threads the bilayer; sequence LAFIPLAFLDTALCWWIFISL. The Cytoplasmic segment spans residues 383 to 403; sequence TQTMKLLKLRRNIVKLSLYRH. Residues 404 to 424 form a helical membrane-spanning segment; the sequence is FTNTLILAVAASIVFIIWTTM. Over 425 to 437 the chain is Lumenal; the sequence is KFRIVTCQSDWRE. A helical transmembrane segment spans residues 438–458; it reads LWVDDAIWRLLFSMILFVIMV. Topologically, residues 459–555 are cytoplasmic; it reads LWRPSANNQR…ITHFERSKME (97 aa). The interval 473–516 is disordered; it reads PLSEEEEEDEQKEPMLKESFEGMKMRSTKQEPNGNSKVNKAQED. Basic and acidic residues predominate over residues 484-496; that stretch reads KEPMLKESFEGMK. A compositionally biased stretch (polar residues) spans 502–511; that stretch reads QEPNGNSKVN. Residue Ser540 is modified to Phosphoserine.

This sequence belongs to the LU7TM family. TMEM87 subfamily. In terms of assembly, may interact with STOML3; STOML3 potentiates the mechanosensitive ion channel activity associated with TMEM87A.

The protein resides in the cell membrane. It localises to the golgi apparatus membrane. It is found in the cell projection. The protein localises to the ruffle. Functionally, potential monoatomic ion channel gated by mechanical force, implicated in normal touch sensitivity through the generation of mechanically activated currents. However, a direct channel activity is debated and an alternative could be that it functions as a chaperone for an unidentified mechanosensitive ion channel. Could also be involved in cell mechanosensitivity regulating cell adhesion and migration. May also be involved in retrograde transport from endosomes to the trans-Golgi network (TGN). This Homo sapiens (Human) protein is Transmembrane protein 87A.